The following is a 488-amino-acid chain: Probable multidrug resistance protein NorM (488 aa).

Transmembrane regions (helical) follow at residues 11–31, 55–75, 97–117, 127–147, 159–179, 190–210, 247–267, 271–291, 317–337, 355–375, 393–413, and 421–441; these read AILR…AMVF, YAFV…LVAI, AALA…LLVF, AMQF…FMVL, PVMA…YSFI, LAGI…LLAL, GTYA…GIIG, LAAH…PVGL, VGIG…WWMP, VAAM…FDGT, FLVG…LLAF, and GVWW…TLAF.

It belongs to the multi antimicrobial extrusion (MATE) (TC 2.A.66.1) family.

Its subcellular location is the cell inner membrane. Multidrug efflux pump. The protein is Probable multidrug resistance protein NorM (norM) of Pseudomonas aeruginosa (strain ATCC 15692 / DSM 22644 / CIP 104116 / JCM 14847 / LMG 12228 / 1C / PRS 101 / PAO1).